We begin with the raw amino-acid sequence, 20 residues long: Implantin (20 aa).

The protein belongs to the EF-1-beta/EF-1-delta family. Post-translationally, phosphorylated. Uterus and embryo.

Its subcellular location is the cytoplasm. It localises to the nucleus. In terms of biological role, binds DNA. This is Implantin from Mus musculus (Mouse).